Consider the following 185-residue polypeptide: Protein GrpE (185 aa).

Over residues 1–11 the composition is skewed to polar residues; that stretch reads MENTQENPTDQ. The tract at residues 1-38 is disordered; it reads MENTQENPTDQTTEETGREAQAAEPAAQAAENAAPAAE. Positions 19–38 are enriched in low complexity; that stretch reads EAQAAEPAAQAAENAAPAAE.

Belongs to the GrpE family. In terms of assembly, homodimer.

Its subcellular location is the cytoplasm. Functionally, participates actively in the response to hyperosmotic and heat shock by preventing the aggregation of stress-denatured proteins, in association with DnaK and GrpE. It is the nucleotide exchange factor for DnaK and may function as a thermosensor. Unfolded proteins bind initially to DnaJ; upon interaction with the DnaJ-bound protein, DnaK hydrolyzes its bound ATP, resulting in the formation of a stable complex. GrpE releases ADP from DnaK; ATP binding to DnaK triggers the release of the substrate protein, thus completing the reaction cycle. Several rounds of ATP-dependent interactions between DnaJ, DnaK and GrpE are required for fully efficient folding. This Burkholderia mallei (strain NCTC 10247) protein is Protein GrpE.